A 191-amino-acid chain; its full sequence is Holliday junction branch migration complex subunit RuvA (191 aa).

A domain I region spans residues 1-64 (MIRGVRGTLV…EDELALYGFA (64 aa)). The interval 65–136 (TEAELELFLS…ELRGRLPALT (72 aa)) is domain II. Residues 136–139 (TEVQ) form a flexible linker region. Positions 140–191 (AGEPIDQELVAALQALGYTAQEARQAATHPEVRRAPSLEERIVAALRQLAPP) are domain III.

The protein belongs to the RuvA family. As to quaternary structure, homotetramer. Forms an RuvA(8)-RuvB(12)-Holliday junction (HJ) complex. HJ DNA is sandwiched between 2 RuvA tetramers; dsDNA enters through RuvA and exits via RuvB. An RuvB hexamer assembles on each DNA strand where it exits the tetramer. Each RuvB hexamer is contacted by two RuvA subunits (via domain III) on 2 adjacent RuvB subunits; this complex drives branch migration. In the full resolvosome a probable DNA-RuvA(4)-RuvB(12)-RuvC(2) complex forms which resolves the HJ.

The protein resides in the cytoplasm. The RuvA-RuvB-RuvC complex processes Holliday junction (HJ) DNA during genetic recombination and DNA repair, while the RuvA-RuvB complex plays an important role in the rescue of blocked DNA replication forks via replication fork reversal (RFR). RuvA specifically binds to HJ cruciform DNA, conferring on it an open structure. The RuvB hexamer acts as an ATP-dependent pump, pulling dsDNA into and through the RuvAB complex. HJ branch migration allows RuvC to scan DNA until it finds its consensus sequence, where it cleaves and resolves the cruciform DNA. The chain is Holliday junction branch migration complex subunit RuvA from Thermomicrobium roseum (strain ATCC 27502 / DSM 5159 / P-2).